Consider the following 518-residue polypeptide: Cytochrome P450 26C1 (518 aa).

A helical transmembrane segment spans residues 293–313; it reads LLFAAFFTTASASTSLILLLL. Cys-455 contacts heme.

Belongs to the cytochrome P450 family. Heme serves as cofactor.

The protein localises to the membrane. The catalysed reaction is an organic molecule + reduced [NADPH--hemoprotein reductase] + O2 = an alcohol + oxidized [NADPH--hemoprotein reductase] + H2O + H(+). The enzyme catalyses all-trans-retinoate + reduced [NADPH--hemoprotein reductase] + O2 = all-trans-4-hydroxyretinoate + oxidized [NADPH--hemoprotein reductase] + H2O + H(+). It carries out the reaction all-trans-4-hydroxyretinoate + reduced [NADPH--hemoprotein reductase] + O2 = all-trans-4-oxoretinoate + oxidized [NADPH--hemoprotein reductase] + 2 H2O + H(+). It catalyses the reaction 9-cis-retinoate + reduced [NADPH--hemoprotein reductase] + O2 = 9-cis-4-hydroxyretinoate + oxidized [NADPH--hemoprotein reductase] + H2O + H(+). The catalysed reaction is 9-cis-4-hydroxyretinoate + reduced [NADPH--hemoprotein reductase] + O2 = 9-cis-4-oxoretinoate + oxidized [NADPH--hemoprotein reductase] + 2 H2O + H(+). The enzyme catalyses all-trans-4-hydroxy-13,14-dihydroretinoate + reduced [NADPH--hemoprotein reductase] + O2 = all-trans-4-oxo-13,14-dihydroretinoate + oxidized [NADPH--hemoprotein reductase] + 2 H2O + H(+). It carries out the reaction all-trans-13,14-dihydroretinoate + reduced [NADPH--hemoprotein reductase] + O2 = all-trans-4-hydroxy-13,14-dihydroretinoate + oxidized [NADPH--hemoprotein reductase] + H2O + H(+). In terms of biological role, a cytochrome P450 monooxygenase involved in the metabolism of retinoates (RAs), the active metabolites of vitamin A, and critical signaling molecules in animals. RAs exist as at least four different isomers: all-trans-RA (atRA), 9-cis-RA, 13-cis-RA, and 9,13-dicis-RA, where atRA is considered to be the biologically active isomer, although 9-cis-RA and 13-cis-RA also have activity. Catalyzes the oxidation of atRA primarily at C-4. Oxidation of atRA limits its biological activity and initiates a degradative process leading to its eventual elimination, thereby contributes to the regulation of atRA homeostasis and signaling. Able to metabolize other RAs such as 9-cis with high efficiency. Can oxidize all-trans-13,14-dihydroretinoate (DRA) to metabolites which could include all-trans-4-oxo-DRA, all-trans-4-hydroxy-DRA, all-trans-5,8-epoxy-DRA, and all-trans-18-hydroxy-DRA. Shares sequence similarity with other CYP26 family members, but has higher affinity to 9-cis-RA and is much less sensitive to the inhibitory effects of ketoconazole. In cooperation with Cyp26a1, contributes to the CNS patterning and the development of regions of higher visual acuity. This chain is Cytochrome P450 26C1, found in Mus musculus (Mouse).